Consider the following 1714-residue polypeptide: uncharacterized protein (1714 aa).

Disordered regions lie at residues S47 to L70 and K584 to K616. ATP-binding positions include A607–S614 and A806–T813. Positions A607–K616 are enriched in basic and acidic residues. Residues L793–S963 enclose the Helicase ATP-binding domain. The DEVH box signature appears at D913–H916. Residues K1197–E1223 form a disordered region. Basic and acidic residues predominate over residues K1199–E1218. Residues A1237–L1391 enclose the Helicase C-terminal domain.

It belongs to the helicase family. SKI2 subfamily.

It is found in the nucleus. This is an uncharacterized protein from Caenorhabditis elegans.